A 418-amino-acid polypeptide reads, in one-letter code: MFRRLLIATIVGILAAFAVAGFRHAMLLLEWLFLNNDSGSLVNAATNLSPWRRLLTPALGGLAAGLLLMGWQKFTQQRPHAPTDYMEALQTDGQFDYAASLVKSLASLLVVTSGSAIGREGAMILLAALAASCFAQRFTPRQEWKLWIACGAAAGMAAAYRAPLAGSLFIAEVLFGTMMLASLGPVIISAVVALLISNLINHSDALLYSVQLSVTVQARDYALIISTGVLAGLCGPLLLTLMNACHRGFVSLKLAPPWQLALGGLIVGLLSLFTPAVWGNGYSTVQSFLTAPPLLMIIAGIFLCKLCAVLASSGSGAPGGVFTPTLFIGLAIGMLYGRSLGLWLPDGEEITLLLGLTGMATLLAATTHAPIMSTLMICEMTGEYQLLPGLLIACVIASVISRTLHRDSIYRQHTAKHS.

The Cytoplasmic portion of the chain corresponds to 1 to 4 (MFRR). A helical membrane pass occupies residues 5–25 (LLIATIVGILAAFAVAGFRHA). The Periplasmic portion of the chain corresponds to 26–53 (MLLLEWLFLNNDSGSLVNAATNLSPWRR). The helical transmembrane segment at 54–74 (LLTPALGGLAAGLLLMGWQKF) threads the bilayer. The Cytoplasmic portion of the chain corresponds to 75 to 145 (TQQRPHAPTD…QRFTPRQEWK (71 aa)). Residues 146–166 (LWIACGAAAGMAAAYRAPLAG) traverse the membrane as a helical segment. The Periplasmic segment spans residues 167 to 177 (SLFIAEVLFGT). A helical transmembrane segment spans residues 178–200 (MMLASLGPVIISAVVALLISNLI). At 201–221 (NHSDALLYSVQLSVTVQARDY) the chain is on the cytoplasmic side. The helical transmembrane segment at 222-242 (ALIISTGVLAGLCGPLLLTLM) threads the bilayer. Residues 243 to 257 (NACHRGFVSLKLAPP) lie on the Periplasmic side of the membrane. Residues 258-278 (WQLALGGLIVGLLSLFTPAVW) form a helical membrane-spanning segment. Over 279–290 (GNGYSTVQSFLT) the chain is Cytoplasmic. Residues 291–311 (APPLLMIIAGIFLCKLCAVLA) form a helical membrane-spanning segment. Topologically, residues 312–315 (SSGS) are periplasmic. Residues 316 to 336 (GAPGGVFTPTLFIGLAIGMLY) traverse the membrane as a helical segment. At 337–351 (GRSLGLWLPDGEEIT) the chain is on the cytoplasmic side. A helical membrane pass occupies residues 352–372 (LLLGLTGMATLLAATTHAPIM). Residues 373–379 (STLMICE) are Periplasmic-facing. The chain crosses the membrane as a helical span at residues 380 to 400 (MTGEYQLLPGLLIACVIASVI). Topologically, residues 401–418 (SRTLHRDSIYRQHTAKHS) are cytoplasmic.

This sequence belongs to the chloride channel (TC 2.A.49) family. ClcB subfamily.

The protein localises to the cell inner membrane. Functionally, probably acts as an electrical shunt for an outwardly-directed proton pump that is linked to amino acid decarboxylation, as part of the extreme acid resistance (XAR) response. In Escherichia coli O6:H1 (strain CFT073 / ATCC 700928 / UPEC), this protein is Voltage-gated ClC-type chloride channel ClcB (clcB).